The primary structure comprises 294 residues: NAD kinase (294 aa).

Residue D72 is the Proton acceptor of the active site. NAD(+) contacts are provided by residues 72–73, 146–147, R157, R174, D176, 187–192, and Q247; these read DG, ND, and TAYSLS.

Belongs to the NAD kinase family. It depends on a divalent metal cation as a cofactor.

Its subcellular location is the cytoplasm. The catalysed reaction is NAD(+) + ATP = ADP + NADP(+) + H(+). Its function is as follows. Involved in the regulation of the intracellular balance of NAD and NADP, and is a key enzyme in the biosynthesis of NADP. Catalyzes specifically the phosphorylation on 2'-hydroxyl of the adenosine moiety of NAD to yield NADP. This Marinobacter nauticus (strain ATCC 700491 / DSM 11845 / VT8) (Marinobacter aquaeolei) protein is NAD kinase.